A 200-amino-acid chain; its full sequence is GTP cyclohydrolase-2 (200 aa).

50 to 54 (RVHSE) contacts GTP. Residues Cys55, Cys66, and Cys68 each coordinate Zn(2+). GTP-binding positions include Gln71, 93–95 (EGR), and Thr115. The Proton acceptor role is filled by Asp127. Arg129 serves as the catalytic Nucleophile. Positions 150 and 155 each coordinate GTP.

It belongs to the GTP cyclohydrolase II family. Zn(2+) serves as cofactor.

It catalyses the reaction GTP + 4 H2O = 2,5-diamino-6-hydroxy-4-(5-phosphoribosylamino)-pyrimidine + formate + 2 phosphate + 3 H(+). It participates in cofactor biosynthesis; riboflavin biosynthesis; 5-amino-6-(D-ribitylamino)uracil from GTP: step 1/4. In terms of biological role, catalyzes the conversion of GTP to 2,5-diamino-6-ribosylamino-4(3H)-pyrimidinone 5'-phosphate (DARP), formate and pyrophosphate. The polypeptide is GTP cyclohydrolase-2 (Acinetobacter baumannii (strain SDF)).